The sequence spans 293 residues: 4-hydroxybenzoate octaprenyltransferase (293 aa).

7 helical membrane-spanning segments follow: residues 25–45, 48–68, 101–121, 142–162, 165–185, 223–243, and 271–291; these read IGNF…AKGL, LKVL…GCVI, LFVV…PLTI, HFPQ…AFAA, GAVA…ATIY, VMLA…FWYL, and FLNN…DLHL.

This sequence belongs to the UbiA prenyltransferase family. The cofactor is Mg(2+).

It localises to the cell inner membrane. The catalysed reaction is all-trans-octaprenyl diphosphate + 4-hydroxybenzoate = 4-hydroxy-3-(all-trans-octaprenyl)benzoate + diphosphate. The protein operates within cofactor biosynthesis; ubiquinone biosynthesis. Catalyzes the prenylation of para-hydroxybenzoate (PHB) with an all-trans polyprenyl group. Mediates the second step in the final reaction sequence of ubiquinone-8 (UQ-8) biosynthesis, which is the condensation of the polyisoprenoid side chain with PHB, generating the first membrane-bound Q intermediate 3-octaprenyl-4-hydroxybenzoate. The polypeptide is 4-hydroxybenzoate octaprenyltransferase (Alkalilimnicola ehrlichii (strain ATCC BAA-1101 / DSM 17681 / MLHE-1)).